A 635-amino-acid chain; its full sequence is Probable potassium transport system protein Kup (635 aa).

The next 12 membrane-spanning stretches (helical) occupy residues 22 to 42 (LVIG…LYTL), 59 to 79 (VLGI…LKYV), 111 to 131 (MYVV…DGVI), 148 to 168 (APKL…MLFL), 180 to 200 (AFGP…VYNM), 216 to 236 (VLFF…VVLA), 259 to 279 (WQFV…ALVL), 297 to 317 (ALYP…QALI), 349 to 369 (IYVP…VVGF), 378 to 398 (AYGV…VIYA), 404 to 424 (VPAP…CAFF), and 428 to 448 (IIKF…LFTL).

This sequence belongs to the HAK/KUP transporter (TC 2.A.72) family.

It localises to the cell inner membrane. The enzyme catalyses K(+)(in) + H(+)(in) = K(+)(out) + H(+)(out). Its function is as follows. Transport of potassium into the cell. Likely operates as a K(+):H(+) symporter. This chain is Probable potassium transport system protein Kup, found in Xanthomonas oryzae pv. oryzae (strain KACC10331 / KXO85).